Reading from the N-terminus, the 411-residue chain is Inhibin beta B chain (411 aa).

The first 28 residues, 1 to 28, serve as a signal peptide directing secretion; that stretch reads MDGLPGRALGAACLLLLVAGWLGPEAWG. Residues 28 to 69 form a disordered region; it reads GSPTPPPSPAAPPPPPPPGAPGGSQDTCTSCGGGGGGFRRPE. A propeptide spanning residues 29–296 is cleaved from the precursor; it reads SPTPPPSPAA…GDSRHRIRKR (268 aa). Residues 30–47 show a composition bias toward pro residues; that stretch reads PTPPPSPAAPPPPPPPGA. Asn-97 carries N-linked (GlcNAc...) asparagine glycosylation. Disulfide bonds link Cys-300-Cys-308, Cys-307-Cys-376, Cys-336-Cys-408, and Cys-340-Cys-410.

The protein belongs to the TGF-beta family. Dimeric, linked by one or more disulfide bonds. Inhibin B is a dimer of alpha and beta-B. Activin B is a homodimer of beta-B. Activin AB is a dimer of beta-A and beta-B. Interacts with FST and FSTL3. Activin B interacts with BMPR2. In terms of tissue distribution, uterus, testis, ovary, lung, kidney, brain, CJ7 embryonic stem cells, and possibly in liver.

The protein resides in the secreted. Its function is as follows. Inhibins and activins inhibit and activate, respectively, the secretion of follitropin by the pituitary gland. Inhibins/activins are involved in regulating a number of diverse functions such as hypothalamic and pituitary hormone secretion, gonadal hormone secretion, germ cell development and maturation, erythroid differentiation, insulin secretion, nerve cell survival, embryonic axial development or bone growth, depending on their subunit composition. Inhibins appear to oppose the functions of activins. Activin B is a dimer of alpha and beta-B that plays a role in several essential biological processes including embryonic development, stem cell maintenance and differentiation, haematopoiesis, cell proliferation and wound healing. Signals through type I receptor ACVR1C, abundantly expressed in pancreatic beta cells, and type II receptors like ACVR2A. Upon ligand binding, these receptors phosphorylate intracellular signaling mediators SMAD2 and SMAD3, which form a complex with SMAD4, translocate to the nucleus, and regulate gene expression. Plays a crucial role in the induction of hepcidin by inflammation through activation of ACVR1C and subsequent phosphorylation of SMAD1/5/8. Regulates adipocyte lipid metabolism by decreasing non-esterified fatty acids and glycerol release and increases intracellular triglyceride content. Stimulates wound healing by promoting cell migration and hair follicle regeneration through the JNK and ERK signaling pathways downstream of RHOA. Functionally, inhibin B is a dimer of alpha and beta-B that plays a crucial role in the regulation of the reproductive system by inhibiting the secretion of follicle-stimulating hormone (FSH) from the anterior pituitary gland. Thereby, maintains reproductive homeostasis in both males and females. Acts as a more potent suppressor of FSH release than inhibin A. Functions as competitive receptor antagonist binding activin type II receptors with high affinity in the presence of the TGF-beta type III coreceptor/TGFBR3L. This is Inhibin beta B chain (Inhbb) from Mus musculus (Mouse).